The chain runs to 247 residues: HTH-type transcriptional regulator SarU (247 aa).

DNA-binding regions (H-T-H motif) lie at residues 53–76 (LKEI…SLSK) and 178–201 (LKDL…RLNN).

Belongs to the SarA family.

Its subcellular location is the cytoplasm. Its function is as follows. Positive regulator of RNAII and RNAIII in a cell density-dependent manner. It can contribute to the expression of virulence genes controlled by agr. May also regulate target genes via an agr-independent pathway. The sequence is that of HTH-type transcriptional regulator SarU (sarU) from Staphylococcus aureus (strain COL).